The sequence spans 181 residues: SecB-like chaperone MT2006 (181 aa).

It belongs to the SecB-like family. Homotetramer, interacts with antitoxin HigA1.

Functionally, chaperone component of an atypical, type II toxin-antitoxin chaperone (TAC) module, probably required for antitoxin HigA1 to neutralize its cognate toxin HigB1. The sequence is that of SecB-like chaperone MT2006 (secBL) from Mycobacterium tuberculosis (strain CDC 1551 / Oshkosh).